The following is a 65-amino-acid chain: Toxin CsEM1 (65 aa).

Positions 1-65 constitute an LCN-type CS-alpha/beta domain; sequence KEGYLVNSYT…VWPLPNKTCN (65 aa). 4 disulfides stabilise this stretch: cysteine 12–cysteine 64, cysteine 16–cysteine 40, cysteine 25–cysteine 45, and cysteine 29–cysteine 47.

It belongs to the long (4 C-C) scorpion toxin superfamily. Sodium channel inhibitor family. Beta subfamily. Expressed by the venom gland.

It localises to the secreted. Its function is as follows. Beta toxins bind voltage-independently at site-4 of sodium channels (Nav) and shift the voltage of activation toward more negative potentials thereby affecting sodium channel activation and promoting spontaneous and repetitive firing. Highly potent. In Centruroides sculpturatus (Arizona bark scorpion), this protein is Toxin CsEM1.